Consider the following 177-residue polypeptide: Large ribosomal subunit protein uL6 (177 aa).

The protein belongs to the universal ribosomal protein uL6 family. Part of the 50S ribosomal subunit.

In terms of biological role, this protein binds to the 23S rRNA, and is important in its secondary structure. It is located near the subunit interface in the base of the L7/L12 stalk, and near the tRNA binding site of the peptidyltransferase center. The sequence is that of Large ribosomal subunit protein uL6 from Pseudomonas fluorescens (strain Pf0-1).